We begin with the raw amino-acid sequence, 59 residues long: UPF0434 protein lpl1884 (59 aa).

Belongs to the UPF0434 family.

The chain is UPF0434 protein lpl1884 from Legionella pneumophila (strain Lens).